The chain runs to 253 residues: Complement C1q subcomponent subunit B (253 aa).

Positions 1–25 are cleaved as a signal peptide; it reads MKTQWGEVWTHLLLLLLGFLHVSWA. At glutamine 26 the chain carries Pyrrolidone carboxylic acid. Residues 29 to 112 form the Collagen-like domain; that stretch reads CTGPPGIPGI…GPRGPKGDSG (84 aa). Residues proline 33, proline 36, proline 39, proline 51, and proline 54 each carry the 4-hydroxyproline modification. A disordered region spans residues 35-115; that stretch reads IPGIPGVPGV…GPKGDSGDYG (81 aa). 5-hydroxylysine is present on residues lysine 57 and lysine 60. A 4-hydroxyproline modification is found at proline 63. Position 75 is a 5-hydroxylysine (lysine 75). The span at 78 to 96 shows a compositional bias: low complexity; it reads PGIPGTPGKVGPKGPVGPK. 4-hydroxyproline is present on residues proline 81 and proline 84. Residues lysine 90 and lysine 96 each carry the 5-hydroxylysine modification. A 4-hydroxyproline modification is found at proline 99. Lysine 108 is modified (5-hydroxylysine). Positions 115–253 constitute a C1q domain; that stretch reads GATQKVAFSA…GFLLFPDMDA (139 aa). Cysteine 179 and cysteine 198 form a disulfide bridge. Residues aspartate 199, tyrosine 200, and glutamine 206 each contribute to the Ca(2+) site.

As to quaternary structure, core component of the complement C1 complex, a calcium-dependent complex composed of 1 molecule of the C1Q subcomplex, 2 molecules of C1R and 2 molecules of C1S. The C1Q subcomplex is composed 18 subunits: 3 chains of C1QA, C1QB, and C1QC trimerize to form 6 collagen-like triple helices connected to six globular ligand-recognition modules (C1q domain). Hydroxylated on lysine and proline residues. Hydroxylated lysine residues can be glycosylated. Mouse C1Q contains up to 64.0 hydroxylysine-galactosylglucose residues. Total percentage hydroxylysine residues glycosylated is 95.1%. Contains no hydroxylysine-monosaccharides. In terms of tissue distribution, highest expression in thioglycolate-activated peritoneal macrophages. Also found in spleen, thymus and heart. Very weak expression liver, kidney, lung and intestine.

The protein localises to the secreted. Its subcellular location is the cell surface. The C1Q subcomplex is inhibited by sulfated molecules, such as triterpenoid sulfates, heparan sulfate, or chondroitin sulfates. In terms of biological role, core component of the complement C1 complex, a multiprotein complex that initiates the classical pathway of the complement system, a cascade of proteins that leads to phagocytosis and breakdown of pathogens and signaling that strengthens the adaptive immune system. The classical complement pathway is initiated by the C1Q subcomplex of the C1 complex, which specifically binds IgG or IgM immunoglobulins complexed with antigens, forming antigen-antibody complexes on the surface of pathogens: C1QA, together with C1QB and C1QC, specifically recognizes and binds the Fc regions of IgG or IgM via its C1q domain. Immunoglobulin-binding activates the proenzyme C1R, which cleaves C1S, initiating the proteolytic cascade of the complement system. The C1Q subcomplex is activated by a hexamer of IgG complexed with antigens, while it is activated by a pentameric IgM. The C1Q subcomplex also recognizes and binds phosphatidylserine exposed on the surface of cells undergoing programmed cell death, possibly promoting activation of the complement system. The chain is Complement C1q subcomponent subunit B from Mus musculus (Mouse).